Reading from the N-terminus, the 470-residue chain is Argininosuccinate synthase (470 aa).

Residues 17–25 (AFSGGLDTS) and alanine 43 contribute to the ATP site. Residue tyrosine 99 coordinates L-citrulline. Positions 129 and 131 each coordinate ATP. L-aspartate-binding residues include threonine 131, asparagine 135, and aspartate 136. Residue asparagine 135 coordinates L-citrulline. Aspartate 136 contacts ATP. L-citrulline-binding residues include arginine 139 and serine 192. Aspartate 194 contributes to the ATP binding site. L-citrulline contacts are provided by threonine 201, glutamate 203, and glutamate 280. The tract at residues 448–470 (IASRGESSGDELLDRAAMESGTD) is disordered.

It belongs to the argininosuccinate synthase family. Type 2 subfamily. In terms of assembly, homotetramer.

It is found in the cytoplasm. The catalysed reaction is L-citrulline + L-aspartate + ATP = 2-(N(omega)-L-arginino)succinate + AMP + diphosphate + H(+). Its pathway is amino-acid biosynthesis; L-arginine biosynthesis; L-arginine from L-ornithine and carbamoyl phosphate: step 2/3. The polypeptide is Argininosuccinate synthase (Kineococcus radiotolerans (strain ATCC BAA-149 / DSM 14245 / SRS30216)).